A 1379-amino-acid polypeptide reads, in one-letter code: DNA-directed RNA polymerase subunit beta (1379 aa).

Belongs to the RNA polymerase beta chain family. As to quaternary structure, the RNAP catalytic core consists of 2 alpha, 1 beta, 1 beta' and 1 omega subunit. When a sigma factor is associated with the core the holoenzyme is formed, which can initiate transcription.

It carries out the reaction RNA(n) + a ribonucleoside 5'-triphosphate = RNA(n+1) + diphosphate. DNA-dependent RNA polymerase catalyzes the transcription of DNA into RNA using the four ribonucleoside triphosphates as substrates. In Rhizobium johnstonii (strain DSM 114642 / LMG 32736 / 3841) (Rhizobium leguminosarum bv. viciae), this protein is DNA-directed RNA polymerase subunit beta.